A 430-amino-acid chain; its full sequence is Isocitrate dehydrogenase [NADP], mitochondrial (430 aa).

The transit peptide at 1–27 (MIRASAIQRTAMLLRQLRGFSTSATLA) directs the protein to the mitochondrion. NADP(+)-binding positions include 101 to 103 (TIT) and Arg-108. A substrate-binding site is contributed by Thr-103. Residues 120-126 (SPNGTIR), Arg-135, and Arg-158 each bind substrate. Asp-277 is a Mn(2+) binding site. Position 285 (Lys-285) interacts with NADP(+). Residue Asp-300 coordinates Mn(2+). NADP(+)-binding positions include 335-340 (GTVTRH) and Asn-353.

Belongs to the isocitrate and isopropylmalate dehydrogenases family. Homodimer. Mg(2+) is required as a cofactor. It depends on Mn(2+) as a cofactor.

It localises to the mitochondrion. It catalyses the reaction D-threo-isocitrate + NADP(+) = 2-oxoglutarate + CO2 + NADPH. Mitochondrial IDP1 may regulate flux through the tricarboxylic acid cycle and respiration. Its probably critical function is the production of NADPH. The polypeptide is Isocitrate dehydrogenase [NADP], mitochondrial (IDP1) (Candida tropicalis (Yeast)).